The chain runs to 215 residues: Pyrrolidone-carboxylate peptidase (215 aa).

Residues E80, C143, and H167 contribute to the active site.

This sequence belongs to the peptidase C15 family. As to quaternary structure, homotetramer.

It localises to the cytoplasm. The enzyme catalyses Release of an N-terminal pyroglutamyl group from a polypeptide, the second amino acid generally not being Pro.. In terms of biological role, removes 5-oxoproline from various penultimate amino acid residues except L-proline. The polypeptide is Pyrrolidone-carboxylate peptidase (Bacillus anthracis).